The chain runs to 69 residues: Conotoxin Eb6.9 (69 aa).

The signal sequence occupies residues 1-17; the sequence is VLIIAVLFLTACQLTTA. Residues 18–41 constitute a propeptide that is removed on maturation; that stretch reads ETYSRGRQKHRARRSTDKNSKWTR. 3 cysteine pairs are disulfide-bonded: Cys43/Cys57, Cys50/Cys61, and Cys56/Cys68.

Belongs to the conotoxin O1 superfamily. In terms of tissue distribution, expressed by the venom duct.

The protein resides in the secreted. The protein is Conotoxin Eb6.9 (E1) of Conus ebraeus (Hebrew cone).